A 150-amino-acid polypeptide reads, in one-letter code: D-aminoacyl-tRNA deacylase (150 aa).

A Gly-cisPro motif, important for rejection of L-amino acids motif is present at residues 138-139; that stretch reads GP.

This sequence belongs to the DTD family. As to quaternary structure, homodimer.

The protein resides in the cytoplasm. The enzyme catalyses glycyl-tRNA(Ala) + H2O = tRNA(Ala) + glycine + H(+). It catalyses the reaction a D-aminoacyl-tRNA + H2O = a tRNA + a D-alpha-amino acid + H(+). Functionally, an aminoacyl-tRNA editing enzyme that deacylates mischarged D-aminoacyl-tRNAs. Also deacylates mischarged glycyl-tRNA(Ala), protecting cells against glycine mischarging by AlaRS. Acts via tRNA-based rather than protein-based catalysis; rejects L-amino acids rather than detecting D-amino acids in the active site. By recycling D-aminoacyl-tRNA to D-amino acids and free tRNA molecules, this enzyme counteracts the toxicity associated with the formation of D-aminoacyl-tRNA entities in vivo and helps enforce protein L-homochirality. The polypeptide is D-aminoacyl-tRNA deacylase (Phocaeicola vulgatus (strain ATCC 8482 / DSM 1447 / JCM 5826 / CCUG 4940 / NBRC 14291 / NCTC 11154) (Bacteroides vulgatus)).